We begin with the raw amino-acid sequence, 863 residues long: Leucine--tRNA ligase (863 aa).

Residues 42–52 (PYPSGKLHMGH) carry the 'HIGH' region motif. A 'KMSKS' region motif is present at residues 623–627 (KMSKS). Lysine 626 lines the ATP pocket.

The protein belongs to the class-I aminoacyl-tRNA synthetase family.

It localises to the cytoplasm. The catalysed reaction is tRNA(Leu) + L-leucine + ATP = L-leucyl-tRNA(Leu) + AMP + diphosphate. This chain is Leucine--tRNA ligase, found in Paraburkholderia xenovorans (strain LB400).